Consider the following 452-residue polypeptide: Isocitrate dehydrogenase [NADP], mitochondrial (452 aa).

The N-terminal 39 residues, 1–39 (MAGYLRVVRSLCRASGSRPAWAPAALTAPTSQEQTRRHY), are a transit peptide targeting the mitochondrion. 4 positions are modified to N6-acetyllysine: lysine 45, lysine 48, lysine 67, and lysine 69. N6-acetyllysine; alternate occurs at positions 80 and 106. Residues lysine 80 and lysine 106 each carry the N6-succinyllysine; alternate modification. NADP(+)-binding positions include 115-117 (TIT) and arginine 122. Threonine 117 contacts substrate. Residues 134-140 (SPNGTIR) and arginine 149 each bind substrate. N6-acetyllysine is present on lysine 155. At lysine 166 the chain carries N6-acetyllysine; alternate. Lysine 166 carries the N6-succinyllysine; alternate modification. Arginine 172 contributes to the substrate binding site. An N6-acetyllysine; alternate mark is found at lysine 180 and lysine 193. An N6-succinyllysine; alternate mark is found at lysine 180 and lysine 193. An N6-acetyllysine modification is found at lysine 199. At lysine 256 the chain carries N6-acetyllysine; alternate. An N6-succinyllysine; alternate modification is found at lysine 256. An N6-acetyllysine mark is found at lysine 263, lysine 272, lysine 275, and lysine 280. An N6-acetyllysine; alternate modification is found at lysine 282. Lysine 282 carries the N6-succinyllysine; alternate modification. Aspartate 291 is a Mn(2+) binding site. Lysine 299 contacts NADP(+). Mn(2+) is bound at residue aspartate 314. NADP(+) is bound by residues 349–354 (GTVTRH) and asparagine 367. Lysine 384 carries the N6-acetyllysine; alternate modification. Lysine 384 is modified (N6-succinyllysine; alternate). N6-acetyllysine is present on residues lysine 400, lysine 413, and lysine 442.

The protein belongs to the isocitrate and isopropylmalate dehydrogenases family. Homodimer. It depends on Mg(2+) as a cofactor. Requires Mn(2+) as cofactor. Post-translationally, acetylation at Lys-413 dramatically reduces catalytic activity. Deacetylated by SIRT3.

The protein localises to the mitochondrion. It carries out the reaction D-threo-isocitrate + NADP(+) = 2-oxoglutarate + CO2 + NADPH. Functionally, plays a role in intermediary metabolism and energy production. It may tightly associate or interact with the pyruvate dehydrogenase complex. In Macaca fascicularis (Crab-eating macaque), this protein is Isocitrate dehydrogenase [NADP], mitochondrial (IDH2).